The primary structure comprises 251 residues: MNVSDLLNILNELLHPEYFSDYGPNGLQVGNAQTAIRKVAVAVTADLATIEKAIACEANVLLVHHGIFWKGMPYSITGILYQRMQRLMEGNIQLIAYHLPLDAHTTIGNNWKVARDLGWEQLESFGSSQPSLGVKGVFPEMEVHDFISQLSAYYQTPVLAKALGGKKRVSSAALISGGAYREISEAKNQQVDCFITGNFDEPAWSLAHELAIHFLAFGHTATEKVGPKALAQYLKGAGLESVVFLDTDNPF.

Positions 64, 65, 102, 219, and 223 each coordinate a divalent metal cation.

This sequence belongs to the GTP cyclohydrolase I type 2/NIF3 family. Homohexamer.

The sequence is that of GTP cyclohydrolase 1 type 2 homolog from Chlamydia trachomatis serovar D (strain ATCC VR-885 / DSM 19411 / UW-3/Cx).